Here is a 200-residue protein sequence, read N- to C-terminus: NADH-quinone oxidoreductase subunit C (200 aa).

Belongs to the complex I 30 kDa subunit family. In terms of assembly, NDH-1 is composed of 14 different subunits. Subunits NuoB, C, D, E, F, and G constitute the peripheral sector of the complex.

Its subcellular location is the cell inner membrane. It catalyses the reaction a quinone + NADH + 5 H(+)(in) = a quinol + NAD(+) + 4 H(+)(out). In terms of biological role, NDH-1 shuttles electrons from NADH, via FMN and iron-sulfur (Fe-S) centers, to quinones in the respiratory chain. The immediate electron acceptor for the enzyme in this species is believed to be ubiquinone. Couples the redox reaction to proton translocation (for every two electrons transferred, four hydrogen ions are translocated across the cytoplasmic membrane), and thus conserves the redox energy in a proton gradient. This Chelativorans sp. (strain BNC1) protein is NADH-quinone oxidoreductase subunit C.